A 729-amino-acid chain; its full sequence is Phosphoribosylformylglycinamidine synthase subunit PurL (729 aa).

The active site involves His-54. Residues Tyr-57 and Lys-96 each contribute to the ATP site. A Mg(2+)-binding site is contributed by Glu-98. Residues 99–102 (SHNH) and Arg-121 each bind substrate. His-100 acts as the Proton acceptor in catalysis. Asp-122 lines the Mg(2+) pocket. Gln-245 serves as a coordination point for substrate. Mg(2+) is bound at residue Asp-273. 317–319 (ETQ) contributes to the substrate binding site. Positions 495 and 532 each coordinate ATP. Asn-533 serves as a coordination point for Mg(2+). Ser-535 provides a ligand contact to substrate.

This sequence belongs to the FGAMS family. As to quaternary structure, monomer. Part of the FGAM synthase complex composed of 1 PurL, 1 PurQ and 2 PurS subunits.

It localises to the cytoplasm. It carries out the reaction N(2)-formyl-N(1)-(5-phospho-beta-D-ribosyl)glycinamide + L-glutamine + ATP + H2O = 2-formamido-N(1)-(5-O-phospho-beta-D-ribosyl)acetamidine + L-glutamate + ADP + phosphate + H(+). It participates in purine metabolism; IMP biosynthesis via de novo pathway; 5-amino-1-(5-phospho-D-ribosyl)imidazole from N(2)-formyl-N(1)-(5-phospho-D-ribosyl)glycinamide: step 1/2. Its function is as follows. Part of the phosphoribosylformylglycinamidine synthase complex involved in the purines biosynthetic pathway. Catalyzes the ATP-dependent conversion of formylglycinamide ribonucleotide (FGAR) and glutamine to yield formylglycinamidine ribonucleotide (FGAM) and glutamate. The FGAM synthase complex is composed of three subunits. PurQ produces an ammonia molecule by converting glutamine to glutamate. PurL transfers the ammonia molecule to FGAR to form FGAM in an ATP-dependent manner. PurS interacts with PurQ and PurL and is thought to assist in the transfer of the ammonia molecule from PurQ to PurL. The protein is Phosphoribosylformylglycinamidine synthase subunit PurL of Staphylococcus aureus (strain Mu3 / ATCC 700698).